The chain runs to 163 residues: IQ domain-containing protein F2 (163 aa).

IQ domains follow at residues 42 to 71 and 98 to 127; these read RVIA…STWI and RERA…AIYV.

This is IQ domain-containing protein F2 (IQCF2) from Bos taurus (Bovine).